The chain runs to 496 residues: Probable CtpA-like serine protease (496 aa).

Over residues Met1–Glu16 the composition is skewed to basic and acidic residues. The interval Met1–Asn27 is disordered. The span at Ala18–Asn27 shows a compositional bias: polar residues. The chain crosses the membrane as a helical span at residues Phe39–Ile59. The PDZ domain occupies Thr124–Gly206. Active-site charge relay system residues include Ser329, Asp340, and Lys354.

Belongs to the peptidase S41A family.

It is found in the cell membrane. This chain is Probable CtpA-like serine protease, found in Staphylococcus aureus (strain bovine RF122 / ET3-1).